The following is a 526-amino-acid chain: WRKY transcription factor 72A (526 aa).

Composition is skewed to basic and acidic residues over residues 40–52 (KERKSIHNEDDNS) and 60–76 (LTGDKKDDQLESAKADM). Disordered stretches follow at residues 40–76 (KERKSIHNEDDNSKSSQQKDLTGDKKDDQLESAKADM) and 170–200 (SSTKSSPSNLSPENSLGEVKDDEKGTDQTWP). Positions 62–106 (GDKKDDQLESAKADMEEVMEENQRLKKHLDKIMKDYRNLQMQFHE) form a coiled coil. Over residues 170-185 (SSTKSSPSNLSPENSL) the composition is skewed to low complexity. Positions 232–298 (CDTPTMNDGC…YEGTHNHPLP (67 aa)) form a DNA-binding region, WRKY.

Belongs to the WRKY group II-b family. As to expression, expressed in roots, trichomes and fruits.

Its subcellular location is the nucleus. Transcription activator involved in the transcriptional regulation of terpene biosynthesis in glandular trichomes. Binds to the promoter of the linalool synthase TPS5 and promotes TPS5 gene transactivation. In association with WRKY72B, contributes to basal defense against root-knot nematodes (RKNs) and potato aphids, as well as Mi-1-mediated gene-for-gene resistance to these pests. Both WRKY72A and WRKY72B are not required for gene-for-gene resistance mediated by Pto, another tomato R gene. In Solanum lycopersicum (Tomato), this protein is WRKY transcription factor 72A.